The chain runs to 142 residues: Large ribosomal subunit protein uL11 (142 aa).

The protein belongs to the universal ribosomal protein uL11 family. In terms of assembly, part of the ribosomal stalk of the 50S ribosomal subunit. Interacts with L10 and the large rRNA to form the base of the stalk. L10 forms an elongated spine to which L12 dimers bind in a sequential fashion forming a multimeric L10(L12)X complex. In terms of processing, one or more lysine residues are methylated.

Its function is as follows. Forms part of the ribosomal stalk which helps the ribosome interact with GTP-bound translation factors. This Proteus vulgaris protein is Large ribosomal subunit protein uL11.